The following is a 155-amino-acid chain: Large ribosomal subunit protein uL30 (155 aa).

This sequence belongs to the universal ribosomal protein uL30 family. In terms of assembly, part of the 50S ribosomal subunit.

The chain is Large ribosomal subunit protein uL30 from Pyrococcus furiosus (strain ATCC 43587 / DSM 3638 / JCM 8422 / Vc1).